Consider the following 199-residue polypeptide: Replication protein (199 aa).

Belongs to the Gram-positive plasmids replication protein type 2 family.

In terms of biological role, is essential for plasmid replication. Nicks the positive strand at the plus origin of replication. In Staphylococcus aureus, this protein is Replication protein (repF).